Reading from the N-terminus, the 556-residue chain is 2-succinyl-5-enolpyruvyl-6-hydroxy-3-cyclohexene-1-carboxylate synthase (556 aa).

The protein belongs to the TPP enzyme family. MenD subfamily. Homodimer. Mg(2+) is required as a cofactor. It depends on Mn(2+) as a cofactor. Requires thiamine diphosphate as cofactor.

It carries out the reaction isochorismate + 2-oxoglutarate + H(+) = 5-enolpyruvoyl-6-hydroxy-2-succinyl-cyclohex-3-ene-1-carboxylate + CO2. Its pathway is quinol/quinone metabolism; 1,4-dihydroxy-2-naphthoate biosynthesis; 1,4-dihydroxy-2-naphthoate from chorismate: step 2/7. The protein operates within quinol/quinone metabolism; menaquinone biosynthesis. Its function is as follows. Catalyzes the thiamine diphosphate-dependent decarboxylation of 2-oxoglutarate and the subsequent addition of the resulting succinic semialdehyde-thiamine pyrophosphate anion to isochorismate to yield 2-succinyl-5-enolpyruvyl-6-hydroxy-3-cyclohexene-1-carboxylate (SEPHCHC). The chain is 2-succinyl-5-enolpyruvyl-6-hydroxy-3-cyclohexene-1-carboxylate synthase from Mycobacterium leprae (strain Br4923).